The primary structure comprises 359 residues: Transaldolase (359 aa).

Lys-139 (schiff-base intermediate with substrate) is an active-site residue.

It belongs to the transaldolase family. Type 2 subfamily.

Its subcellular location is the cytoplasm. The enzyme catalyses D-sedoheptulose 7-phosphate + D-glyceraldehyde 3-phosphate = D-erythrose 4-phosphate + beta-D-fructose 6-phosphate. It participates in carbohydrate degradation; pentose phosphate pathway; D-glyceraldehyde 3-phosphate and beta-D-fructose 6-phosphate from D-ribose 5-phosphate and D-xylulose 5-phosphate (non-oxidative stage): step 2/3. In terms of biological role, transaldolase is important for the balance of metabolites in the pentose-phosphate pathway. The sequence is that of Transaldolase from Thiobacillus denitrificans (strain ATCC 25259 / T1).